The sequence spans 202 residues: Small ribosomal subunit protein uS4 (202 aa).

Residues 22-43 (TRKSARRAYPPGQHGQNRKKRS) are disordered. The S4 RNA-binding domain occupies 90–152 (MRLDNTVFRL…APSRKLVENN (63 aa)).

Belongs to the universal ribosomal protein uS4 family. Part of the 30S ribosomal subunit. Contacts protein S5. The interaction surface between S4 and S5 is involved in control of translational fidelity.

In terms of biological role, one of the primary rRNA binding proteins, it binds directly to 16S rRNA where it nucleates assembly of the body of the 30S subunit. Its function is as follows. With S5 and S12 plays an important role in translational accuracy. The sequence is that of Small ribosomal subunit protein uS4 from Nostoc sp. (strain PCC 7120 / SAG 25.82 / UTEX 2576).